The following is a 199-amino-acid chain: Recombination protein RecR (199 aa).

The segment at 58 to 73 (CVRCGNITNADLCGIC) adopts a C4-type zinc-finger fold. Residues 81–176 (GELCVVEDVA…QVTSLAQGVP (96 aa)) enclose the Toprim domain.

This sequence belongs to the RecR family.

Functionally, may play a role in DNA repair. It seems to be involved in an RecBC-independent recombinational process of DNA repair. It may act with RecF and RecO. The protein is Recombination protein RecR of Cereibacter sphaeroides (strain ATCC 17029 / ATH 2.4.9) (Rhodobacter sphaeroides).